We begin with the raw amino-acid sequence, 139 residues long: uncharacterized protein (139 aa).

A run of 2 helical transmembrane segments spans residues 35 to 55 (AYFK…AAAA) and 119 to 139 (CCLF…VFCV).

It is found in the membrane. This is an uncharacterized protein from Saccharomyces cerevisiae (strain ATCC 204508 / S288c) (Baker's yeast).